The primary structure comprises 60 residues: Large ribosomal subunit protein uL30 (60 aa).

Belongs to the universal ribosomal protein uL30 family. In terms of assembly, part of the 50S ribosomal subunit.

The sequence is that of Large ribosomal subunit protein uL30 from Shewanella baltica (strain OS223).